We begin with the raw amino-acid sequence, 170 residues long: Neurotensin/neuromedin N (170 aa).

The signal sequence occupies residues Met-1 to Cys-23. Position 151 is a pyrrolidone carboxylic acid (Gln-151).

The protein belongs to the neurotensin family. In terms of assembly, interacts with NTSR1. Interacts with SORT1. Interacts with SORL1. Post-translationally, neurotensin is cleaved and degraded by Angiotensin-converting enzyme (ACE) and neprilysin (MME).

The protein resides in the secreted. It localises to the cytoplasmic vesicle. Its subcellular location is the secretory vesicle. In terms of biological role, neurotensin may play an endocrine or paracrine role in the regulation of fat metabolism. It causes contraction of smooth muscle. This Homo sapiens (Human) protein is Neurotensin/neuromedin N (NTS).